Here is a 447-residue protein sequence, read N- to C-terminus: Glutamate--tRNA ligase 1 (447 aa).

Residues 10-20 carry the 'HIGH' region motif; the sequence is PSPTGMLHVGN. Residues 240-244 carry the 'KMSKS' region motif; it reads KISKR. Lys243 is an ATP binding site.

This sequence belongs to the class-I aminoacyl-tRNA synthetase family. Glutamate--tRNA ligase type 1 subfamily. As to quaternary structure, monomer.

It localises to the cytoplasm. It carries out the reaction tRNA(Glu) + L-glutamate + ATP = L-glutamyl-tRNA(Glu) + AMP + diphosphate. Catalyzes the attachment of glutamate to tRNA(Glu) in a two-step reaction: glutamate is first activated by ATP to form Glu-AMP and then transferred to the acceptor end of tRNA(Glu). This Rickettsia conorii (strain ATCC VR-613 / Malish 7) protein is Glutamate--tRNA ligase 1.